Here is a 263-residue protein sequence, read N- to C-terminus: Acetylglutamate kinase (263 aa).

Substrate is bound by residues 49 to 50, R71, and N163; that span reads GG.

Belongs to the acetylglutamate kinase family. ArgB subfamily.

It localises to the cytoplasm. It catalyses the reaction N-acetyl-L-glutamate + ATP = N-acetyl-L-glutamyl 5-phosphate + ADP. The protein operates within amino-acid biosynthesis; L-arginine biosynthesis; N(2)-acetyl-L-ornithine from L-glutamate: step 2/4. Its function is as follows. Catalyzes the ATP-dependent phosphorylation of N-acetyl-L-glutamate. This is Acetylglutamate kinase from Moritella abyssi.